The sequence spans 627 residues: Glycerophosphodiester phosphodiesterase domain-containing protein 4 (627 aa).

Residues 1–17 (MLLFLWIETSNEYFNFD) are Cytoplasmic-facing. Residues 18–38 (WVIFLGTGYWFYWSIFILSLA) form a helical membrane-spanning segment. Position 39 (Gly-39) is a topological domain, extracellular. Residues 40–60 (ILTAYSSLLLLLGLLLLWEGI) form a helical membrane-spanning segment. Residues 61–69 (ELYLHLCHK) lie on the Cytoplasmic side of the membrane. The chain crosses the membrane as a helical span at residues 70-90 (ILILLVILPCVILMFIICKFW). The Extracellular segment spans residues 91–107 (KERWLVAGLSLQIFAPY). A helical membrane pass occupies residues 108-128 (VHLVSITVMVILFWPVAIYVA). Topologically, residues 129–162 (RLEREVRMRRYRMTHSEKKRLKKCNVIARLRGLQ) are cytoplasmic. The chain crosses the membrane as a helical span at residues 163 to 183 (VAVGLPFLLIFLSLCLMPLGI). Over 184–468 (YSPCIQEKEN…PHFFMTPKFY (285 aa)) the chain is Extracellular. In terms of domain architecture, GP-PDE spans 198–457 (PTLFGHRGAP…DNIGLLSQLN (260 aa)). Glu-230, Asp-232, and His-245 together coordinate a divalent metal cation. Residues Asn-308 and Asn-397 are each glycosylated (N-linked (GlcNAc...) asparagine). Residues 469–489 (MFIWLLVDIISVLFIVAIFCF) traverse the membrane as a helical segment. Residues 490–627 (HWRRETIKEK…TMPSVEVPYP (138 aa)) lie on the Cytoplasmic side of the membrane.

This sequence belongs to the glycerophosphoryl diester phosphodiesterase family.

The protein localises to the membrane. This chain is Glycerophosphodiester phosphodiesterase domain-containing protein 4 (GDPD4), found in Macaca fascicularis (Crab-eating macaque).